Reading from the N-terminus, the 216-residue chain is Redox-sensing transcriptional repressor Rex 1 (216 aa).

A DNA-binding region (H-T-H motif) is located at residues 16–55 (LYYRYLRMLHDTGKNKVSSTELSEAVQVDSATIRRDFSYF). An NAD(+)-binding site is contributed by 90 to 95 (GVGNLG).

It belongs to the transcriptional regulatory Rex family. As to quaternary structure, homodimer.

The protein localises to the cytoplasm. In terms of biological role, modulates transcription in response to changes in cellular NADH/NAD(+) redox state. The sequence is that of Redox-sensing transcriptional repressor Rex 1 from Enterococcus faecalis (strain ATCC 700802 / V583).